The primary structure comprises 644 residues: Macrolide export ATP-binding/permease protein MacB (644 aa).

The ABC transporter domain occupies 4-242 (IECKNINRYF…SNVGRIREKA (239 aa)). 40–47 (GQSGSGKS) is an ATP binding site. 4 consecutive transmembrane segments (helical) span residues 270 to 290 (LLTM…VALG), 524 to 544 (IALI…LVSV), 574 to 594 (LICV…SLVF), and 607 to 627 (AMSV…FGFM).

Belongs to the ABC transporter superfamily. Macrolide exporter (TC 3.A.1.122) family. As to quaternary structure, homodimer.

The protein resides in the cell inner membrane. Functionally, non-canonical ABC transporter that contains transmembrane domains (TMD), which form a pore in the inner membrane, and an ATP-binding domain (NBD), which is responsible for energy generation. Confers resistance against macrolides. The polypeptide is Macrolide export ATP-binding/permease protein MacB (Neisseria meningitidis serogroup B (strain ATCC BAA-335 / MC58)).